Reading from the N-terminus, the 250-residue chain is Ubiquinone/menaquinone biosynthesis C-methyltransferase UbiE (250 aa).

S-adenosyl-L-methionine is bound by residues serine 73, aspartate 94, and 122-123 (NA).

It belongs to the class I-like SAM-binding methyltransferase superfamily. MenG/UbiE family.

The catalysed reaction is a 2-demethylmenaquinol + S-adenosyl-L-methionine = a menaquinol + S-adenosyl-L-homocysteine + H(+). The enzyme catalyses a 2-methoxy-6-(all-trans-polyprenyl)benzene-1,4-diol + S-adenosyl-L-methionine = a 5-methoxy-2-methyl-3-(all-trans-polyprenyl)benzene-1,4-diol + S-adenosyl-L-homocysteine + H(+). Its pathway is quinol/quinone metabolism; menaquinone biosynthesis; menaquinol from 1,4-dihydroxy-2-naphthoate: step 2/2. The protein operates within cofactor biosynthesis; ubiquinone biosynthesis. Its function is as follows. Methyltransferase required for the conversion of demethylmenaquinol (DMKH2) to menaquinol (MKH2) and the conversion of 2-polyprenyl-6-methoxy-1,4-benzoquinol (DDMQH2) to 2-polyprenyl-3-methyl-6-methoxy-1,4-benzoquinol (DMQH2). The sequence is that of Ubiquinone/menaquinone biosynthesis C-methyltransferase UbiE from Legionella pneumophila (strain Paris).